Reading from the N-terminus, the 74-residue chain is Mitochondrial import receptor subunit TOM6 homolog (74 aa).

Low complexity predominate over residues 1–14; the sequence is MASSGAGVTAAGSA. The segment at 1–24 is disordered; sequence MASSGAGVTAAGSANEAPEIPDNV. Alanine 2 carries the N-acetylalanine modification.

The protein belongs to the Tom6 family. In terms of assembly, forms part of the preprotein translocase complex of the outer mitochondrial membrane (TOM complex) which consists of at least 7 different proteins (TOMM5, TOMM6, TOMM7, TOMM20, TOMM22, TOMM40 and TOMM70).

The protein resides in the mitochondrion outer membrane. This is Mitochondrial import receptor subunit TOM6 homolog (TOMM6) from Bos taurus (Bovine).